Reading from the N-terminus, the 541-residue chain is MLSPQRTAAVASRGAGDAMENGKPGPVQVVLVHKEQHSFELEERALASVLLQDHIRDLDVVVVSVAGAFRKGKSFILDFMLRYLYSQKEHGHSNWLGDPEEPLTGFSWRGGSDPETTGIQIWSEVFTVKKPCGKEVAVVLMDTQGAFDSQSTVKDCATIFALSTMTSSVQIYNLSQNIQEDDLQQLQLFTEYGRLAMDEIFQKPFQTLMFLVRDWSFPYEYNYGLQGGMSFLDKRLQVKEHQHEEIQNVRNHIHSCFSDVTCFLLPHPGLQVATSPDFDGKLKEYIASEFKEQLQTLIPYVLNPSKLMEKEINGSKVTCRGLLEYFKAYIKIYQGEDLPHPKSMLQATAANNLAAAASAKDIYYSSMEEICGGEKPYLSPDILEEKHQEFKQLALDHFKKTKKMGGKDFSFRYQQELEEEITELYENFCKHNGSKNVFSTFRTPAVLFTGIAVLYIASGLTGFIGLEVVAQLFNCMVGLLLIALLTWGYIRYSGQYLELGGAIDSGAAYVLEQASSHIGNSTQAAVRDAIAGRPPADKKSQ.

The disordered stretch occupies residues 1-22 (MLSPQRTAAVASRGAGDAMENG). The N-terminal hypervariable region (HVR) stretch occupies residues 1–25 (MLSPQRTAAVASRGAGDAMENGKPG). Residues 1 to 445 (MLSPQRTAAV…NVFSTFRTPA (445 aa)) lie on the Cytoplasmic side of the membrane. A GB1/RHD3-type G domain is found at 57–306 (DLDVVVVSVA…LIPYVLNPSK (250 aa)). Positions 70, 71, 72, 73, 74, 75, and 109 each coordinate GDP. Position 142 (aspartate 142) interacts with Mg(2+). Residues arginine 213, aspartate 214, valine 272, and serine 275 each coordinate GDP. Positions 344-434 (MLQATAANNL…YENFCKHNGS (91 aa)) are 3HB (three-helix bundle) domain. N6-acetyllysine is present on lysine 391. A helical transmembrane segment spans residues 446-466 (VLFTGIAVLYIASGLTGFIGL). A topological domain (lumenal) is located at residue glutamate 467. Residues 468–488 (VVAQLFNCMVGLLLIALLTWG) traverse the membrane as a helical segment. At 489–541 (YIRYSGQYLELGGAIDSGAAYVLEQASSHIGNSTQAAVRDAIAGRPPADKKSQ) the chain is on the cytoplasmic side.

This sequence belongs to the TRAFAC class dynamin-like GTPase superfamily. GB1/RHD3 GTPase family. GB1 subfamily. Monomeric and homodimeric. The homodimer, transiently formed by two molecules on opposing membranes, is the active form mediating ER membrane fusion. Interacts with ZFYVE27; both proteins are involved in endoplasmic reticulum tubular network organization. Interacts with REEP5; both proteins are involved in endoplasmic reticulum tubular network organization.

It localises to the endoplasmic reticulum membrane. It catalyses the reaction GTP + H2O = GDP + phosphate + H(+). Atlastin-3 (ATL3) is a membrane-anchored GTPase that mediates the GTP-dependent fusion of endoplasmic reticulum (ER) membranes, maintaining the continuous ER network. It facilitates the formation of three-way junctions where ER tubules intersect. Two atlastin-3 on neighboring ER tubules bind GTP and form loose homodimers through the GB1/RHD3-type G domains and 3HB regions. Upon GTP hydrolysis, the 3HB regions tighten, pulling the membranes together to drive their fusion. After fusion, the homodimer disassembles upon release of inorganic phosphate (Pi). Subsequently, GDP dissociates, resetting the monomers to a conformation ready for a new fusion cycle. In Rattus norvegicus (Rat), this protein is Atlastin-3.